Here is a 463-residue protein sequence, read N- to C-terminus: Alpha-L-arabinofuranosidase B (463 aa).

A signal peptide spans 1-26 (MIPQLNRNYAWAIALGLVARSSLVSA). Residues 27–308 (GPCDIYASGG…ILGIGGHNSK (282 aa)) form a catalytic region. Cysteine 29 and cysteine 39 form a disulfide bridge. N-linked (GlcNAc...) asparagine glycosylation occurs at asparagine 81. 2 disulfide bridges follow: cysteine 89–cysteine 94 and cysteine 184–cysteine 185. Aspartate 227 lines the substrate pocket. The active-site Nucleophile is glutamate 229. Asparagine 230 provides a ligand contact to substrate. Asparagine 280 is a glycosylation site (N-linked (GlcNAc...) asparagine). Residue glycine 304 participates in substrate binding. The tract at residues 309–463 (LTVGSSISLR…VSWVVSASFA (155 aa)) is ABD. An N-linked (GlcNAc...) asparagine glycan is attached at asparagine 332. The cysteines at positions 366 and 404 are disulfide-linked. 7 residues coordinate substrate: histidine 381, asparagine 383, phenylalanine 384, histidine 428, aspartate 430, leucine 433, and aspartate 453.

This sequence belongs to the glycosyl hydrolase 54 family. Post-translationally, residue Asn-280 is mannosylated with up to 7 mannose residues.

The protein resides in the secreted. It carries out the reaction Hydrolysis of terminal non-reducing alpha-L-arabinofuranoside residues in alpha-L-arabinosides.. It participates in glycan metabolism; L-arabinan degradation. Secreted alpha-L-arabinofuranosidase that actively hydrolyzes p-NP-alpha-L-arabinofuranoside and is specific for furanose configuration of the carbohydrate ring. Also exhibits significant activity against polymeric arabinose-containing substrates such as arabinan and arabinoxylan, a major component of plant hemicellulose. The sequence is that of Alpha-L-arabinofuranosidase B (abfB) from Penicillium canescens.